A 202-amino-acid polypeptide reads, in one-letter code: Probable host range protein 2-2 (202 aa).

Belongs to the poxviridae C7 protein family.

Functionally, plays a role for multiplication of the virus in different cell types. The chain is Probable host range protein 2-2 from Oryctolagus cuniculus (Rabbit).